The sequence spans 662 residues: UvrABC system protein B (662 aa).

Residues 25-414 (TGLNSKKRSQ…GTVVELIIRP (390 aa)) enclose the Helicase ATP-binding domain. 38 to 45 (GITGSGKT) is a binding site for ATP. A Beta-hairpin motif is present at residues 91–114 (YYDYYQPESYIVRTDTFIEKDSSI). In terms of domain architecture, Helicase C-terminal spans 430 to 592 (QVEDLISEIQ…IIPKTINRAI (163 aa)). The 36-residue stretch at 622-657 (KAHMDKLKKEMFKAASNLEFEQAAKLRNQLKALEEA) folds into the UVR domain.

Belongs to the UvrB family. As to quaternary structure, forms a heterotetramer with UvrA during the search for lesions. Interacts with UvrC in an incision complex.

Its subcellular location is the cytoplasm. Its function is as follows. The UvrABC repair system catalyzes the recognition and processing of DNA lesions. A damage recognition complex composed of 2 UvrA and 2 UvrB subunits scans DNA for abnormalities. Upon binding of the UvrA(2)B(2) complex to a putative damaged site, the DNA wraps around one UvrB monomer. DNA wrap is dependent on ATP binding by UvrB and probably causes local melting of the DNA helix, facilitating insertion of UvrB beta-hairpin between the DNA strands. Then UvrB probes one DNA strand for the presence of a lesion. If a lesion is found the UvrA subunits dissociate and the UvrB-DNA preincision complex is formed. This complex is subsequently bound by UvrC and the second UvrB is released. If no lesion is found, the DNA wraps around the other UvrB subunit that will check the other stand for damage. The chain is UvrABC system protein B from Rickettsia prowazekii (strain Madrid E).